Here is a 683-residue protein sequence, read N- to C-terminus: DNA ligase (683 aa).

NAD(+) is bound by residues 35-39 (DAEYD), 81-82 (SL), and glutamate 112. Catalysis depends on lysine 114, which acts as the N6-AMP-lysine intermediate. NAD(+) contacts are provided by arginine 135, glutamate 170, lysine 277, and lysine 301. Residues cysteine 395, cysteine 398, cysteine 411, and cysteine 417 each contribute to the Zn(2+) site. The 83-residue stretch at 601–683 (SSNSVLNNKV…YRMINSEVSE (83 aa)) folds into the BRCT domain.

Belongs to the NAD-dependent DNA ligase family. LigA subfamily. Requires Mg(2+) as cofactor. Mn(2+) serves as cofactor.

The enzyme catalyses NAD(+) + (deoxyribonucleotide)n-3'-hydroxyl + 5'-phospho-(deoxyribonucleotide)m = (deoxyribonucleotide)n+m + AMP + beta-nicotinamide D-nucleotide.. Functionally, DNA ligase that catalyzes the formation of phosphodiester linkages between 5'-phosphoryl and 3'-hydroxyl groups in double-stranded DNA using NAD as a coenzyme and as the energy source for the reaction. It is essential for DNA replication and repair of damaged DNA. This Wolbachia sp. subsp. Brugia malayi (strain TRS) protein is DNA ligase.